A 320-amino-acid chain; its full sequence is D-alanine--D-alanine ligase (320 aa).

In terms of domain architecture, ATP-grasp spans 104-308; it reads KRVCLSHGVP…YEDLCVEILR (205 aa). 134 to 189 is an ATP binding site; it reads AAEFGMPLMLKAPHEGSTIGIAKVETAEGMQAGFDLCAKYDDVVLVEQFVKGRELT. Mg(2+)-binding residues include D261, E275, and N277.

This sequence belongs to the D-alanine--D-alanine ligase family. Requires Mg(2+) as cofactor. The cofactor is Mn(2+).

Its subcellular location is the cytoplasm. The enzyme catalyses 2 D-alanine + ATP = D-alanyl-D-alanine + ADP + phosphate + H(+). It functions in the pathway cell wall biogenesis; peptidoglycan biosynthesis. In terms of biological role, cell wall formation. This is D-alanine--D-alanine ligase from Janthinobacterium sp. (strain Marseille) (Minibacterium massiliensis).